The primary structure comprises 211 residues: N-(5'-phosphoribosyl)anthranilate isomerase (211 aa).

The protein belongs to the TrpF family.

The enzyme catalyses N-(5-phospho-beta-D-ribosyl)anthranilate = 1-(2-carboxyphenylamino)-1-deoxy-D-ribulose 5-phosphate. The protein operates within amino-acid biosynthesis; L-tryptophan biosynthesis; L-tryptophan from chorismate: step 3/5. In Chromohalobacter salexigens (strain ATCC BAA-138 / DSM 3043 / CIP 106854 / NCIMB 13768 / 1H11), this protein is N-(5'-phosphoribosyl)anthranilate isomerase.